The chain runs to 214 residues: Riboflavin kinase (214 aa).

The disordered stretch occupies residues 1–26; that stretch reads MRPDGPRDPVVGPDSGPEPPYPVRLS. Mg(2+) contacts are provided by Thr-44 and Asn-46. The active-site Nucleophile is Glu-112.

This sequence belongs to the flavokinase family. It depends on Zn(2+) as a cofactor. The cofactor is Mg(2+).

It catalyses the reaction riboflavin + ATP = FMN + ADP + H(+). It participates in cofactor biosynthesis; FMN biosynthesis; FMN from riboflavin (ATP route): step 1/1. Its function is as follows. Catalyzes the phosphorylation of riboflavin (vitamin B2) to form flavin mononucleotide (FMN) coenzyme. This Aspergillus clavatus (strain ATCC 1007 / CBS 513.65 / DSM 816 / NCTC 3887 / NRRL 1 / QM 1276 / 107) protein is Riboflavin kinase (fmn1).